A 214-amino-acid chain; its full sequence is Thiopurine S-methyltransferase (214 aa).

The S-adenosyl-L-methionine site is built by Trp-10, Leu-44, Glu-65, and Arg-122.

Belongs to the class I-like SAM-binding methyltransferase superfamily. TPMT family.

Its subcellular location is the cytoplasm. The enzyme catalyses S-adenosyl-L-methionine + a thiopurine = S-adenosyl-L-homocysteine + a thiopurine S-methylether.. The polypeptide is Thiopurine S-methyltransferase (Teredinibacter turnerae (strain ATCC 39867 / T7901)).